Consider the following 512-residue polypeptide: Lysine--tRNA ligase (512 aa).

2 residues coordinate Mg(2+): Glu-408 and Glu-415.

This sequence belongs to the class-II aminoacyl-tRNA synthetase family. In terms of assembly, homodimer. Requires Mg(2+) as cofactor.

It is found in the cytoplasm. The catalysed reaction is tRNA(Lys) + L-lysine + ATP = L-lysyl-tRNA(Lys) + AMP + diphosphate. This Prochlorococcus marinus (strain MIT 9312) protein is Lysine--tRNA ligase.